The sequence spans 148 residues: Ribosome-binding factor A (148 aa).

The tract at residues 120-148 is disordered; the sequence is AKAREGASYAGDADPYRTAEPDADDAPRA. The span at 133-148 shows a compositional bias: basic and acidic residues; that stretch reads DPYRTAEPDADDAPRA.

It belongs to the RbfA family. Monomer. Binds 30S ribosomal subunits, but not 50S ribosomal subunits or 70S ribosomes.

It is found in the cytoplasm. In terms of biological role, one of several proteins that assist in the late maturation steps of the functional core of the 30S ribosomal subunit. Associates with free 30S ribosomal subunits (but not with 30S subunits that are part of 70S ribosomes or polysomes). Required for efficient processing of 16S rRNA. May interact with the 5'-terminal helix region of 16S rRNA. This is Ribosome-binding factor A from Micrococcus luteus (strain ATCC 4698 / DSM 20030 / JCM 1464 / CCM 169 / CCUG 5858 / IAM 1056 / NBRC 3333 / NCIMB 9278 / NCTC 2665 / VKM Ac-2230) (Micrococcus lysodeikticus).